A 254-amino-acid polypeptide reads, in one-letter code: 3-deoxy-manno-octulosonate cytidylyltransferase (254 aa).

The protein belongs to the KdsB family.

It is found in the cytoplasm. The enzyme catalyses 3-deoxy-alpha-D-manno-oct-2-ulosonate + CTP = CMP-3-deoxy-beta-D-manno-octulosonate + diphosphate. It participates in nucleotide-sugar biosynthesis; CMP-3-deoxy-D-manno-octulosonate biosynthesis; CMP-3-deoxy-D-manno-octulosonate from 3-deoxy-D-manno-octulosonate and CTP: step 1/1. The protein operates within bacterial outer membrane biogenesis; lipopolysaccharide biosynthesis. Its function is as follows. Activates KDO (a required 8-carbon sugar) for incorporation into bacterial lipopolysaccharide in Gram-negative bacteria. The chain is 3-deoxy-manno-octulosonate cytidylyltransferase from Pseudomonas putida (strain W619).